The primary structure comprises 145 residues: D-aminoacyl-tRNA deacylase (145 aa).

Residues 137–138 (GP) carry the Gly-cisPro motif, important for rejection of L-amino acids motif.

The protein belongs to the DTD family. In terms of assembly, homodimer.

The protein resides in the cytoplasm. It catalyses the reaction glycyl-tRNA(Ala) + H2O = tRNA(Ala) + glycine + H(+). The enzyme catalyses a D-aminoacyl-tRNA + H2O = a tRNA + a D-alpha-amino acid + H(+). In terms of biological role, an aminoacyl-tRNA editing enzyme that deacylates mischarged D-aminoacyl-tRNAs. Also deacylates mischarged glycyl-tRNA(Ala), protecting cells against glycine mischarging by AlaRS. Acts via tRNA-based rather than protein-based catalysis; rejects L-amino acids rather than detecting D-amino acids in the active site. By recycling D-aminoacyl-tRNA to D-amino acids and free tRNA molecules, this enzyme counteracts the toxicity associated with the formation of D-aminoacyl-tRNA entities in vivo and helps enforce protein L-homochirality. The sequence is that of D-aminoacyl-tRNA deacylase from Yersinia pestis bv. Antiqua (strain Antiqua).